A 1034-amino-acid polypeptide reads, in one-letter code: MNLAVPAFGLSTNWSGNGNGSNSEEESVLYQRLKMVEELWERVLQSECGQELVDLLTELRLQGTHEAITSEISEEVIMGITQRIEHLELNDAIRAARAFALYFQLINIVEQHYEQNEQQRNRWEASQETNFYEQAGNEEEMVPPSRLGASTEPLPVGIDQNELQASVGTFHWLMRELKRLNVPPQHIQNLLDHLDIRLVITAHPTEIVRHTIRRKQRRVDRILRKLDQLQGSVTGRDWLNTWDAKTAIAQLTEEIRFWWRTDELHQFKPTVLDEVDYSLHYFDEVLFDAVPELSKRLGQAIKETFPHLRAPRANFCYFGSWVGGDRDGNPSVTPEVTWQTACYQRGLVLGKYLFSLGELVAILSPSLHWCKVSQELLDSLERDRIQLPEIYEELSLRYRQEPYRMKLAYVTKRLENTLRRNNRLANPEERQTMITMPAENHYRTGEELLEELRLIQRNLTETGLTCLELENLITQLEVYGFNLAQLDFRQESSRHAEAIAEIAEYMGVLTTPYEEMAEEDKLAWLGVELQTRRPLIPQEMPFSERTRETIETLRTLRHLQMEFGVDICQTYIISMTNDASDVLEVLLLAKEAGLYDPATASNSLRIVPLFETVEDLKNAPGIMDSLFSLPFYRATLAGSYHSLKELQNQPPDYYQIPTTTALLNPGNLQEIMVGYSDSNKDSGFLSSNWEIHKAQKSLQAVAQSHRVILRLFHGRGGSVGRGGGPAYKAILAQPAGTVDGRIKITEQGEVLASKYSLPELALYNLETLTTAVIQASLLKSSFDFIEPWNRIMEELACTARRAYRSLIYEEPDFLDFFLTVTPIPEISELQISSRPARRKGGKADLSSLRAIPWVFSWTQTRFLLPAWYGVGTALKSFVDQDPVKNMKLLRYFYFKWPFFNMVISKVEMTLSKVDLTIASHYVQELSKPEDRERFDRLFQQIKQEYQLTRDFAMEITAHPHLLDGDRSLQRSVLLRNRTIVPLGLLQISLLKRLRQVTQEAETSGVRYRRYSKEELLRGALLTINGIAAGMRNTG.

Residues histidine 203 and lysine 680 contribute to the active site.

It belongs to the PEPCase type 1 family. Mg(2+) is required as a cofactor.

It catalyses the reaction oxaloacetate + phosphate = phosphoenolpyruvate + hydrogencarbonate. Functionally, forms oxaloacetate, a four-carbon dicarboxylic acid source for the tricarboxylic acid cycle. This is Phosphoenolpyruvate carboxylase (ppc) from Synechocystis sp. (strain ATCC 27184 / PCC 6803 / Kazusa).